The primary structure comprises 492 residues: Dipeptide permease D (492 aa).

13 helical membrane-spanning segments follow: residues 14–34, 49–69, 91–111, 138–158, 167–187, 212–232, 236–256, 269–289, 312–332, 344–364, 379–399, 413–433, and 458–478; these read VVALQIWEYFSFYGMRALLIL, ALFSAYCSLVYVTPILGGYLA, LVLGASETAPVFLYLSLAIIV, GGFSLMYAAGNIGSIIAPIAC, WAMGFALAAIGMVAGLVIFLC, NWGWLLVLLVTAPLLIAVLFW, SVYALIVATVIGLAVLARIYL, LIVVLTAFSLLFWAFAQQGGS, MFQSVNAFAVMLCGMVLAWLV, IWGKFALGLGLMSAGFCILTL, LMVLGLAVMGFAELFIDPVAM, VLTGIYMLLSGAIANYLAGVI, and VFSQITWGALACVGVVLVIWL.

The protein belongs to the major facilitator superfamily. Proton-dependent oligopeptide transporter (POT/PTR) (TC 2.A.17) family. DtpD subfamily.

It is found in the cell inner membrane. In terms of biological role, probable proton-dependent permease that transports dipeptides. The protein is Dipeptide permease D of Klebsiella pneumoniae (strain 342).